The following is a 390-amino-acid chain: tRNA-specific 2-thiouridylase MnmA (390 aa).

ATP-binding positions include 36–43 and methionine 62; that span reads GMSGGVDS. An interaction with target base in tRNA region spans residues 122–124; sequence NPD. Cysteine 127 serves as the catalytic Nucleophile. Residues cysteine 127 and cysteine 223 are joined by a disulfide bond. Glycine 151 provides a ligand contact to ATP. Residues 173-175 are interaction with tRNA; the sequence is KDQ. Cysteine 223 serves as the catalytic Cysteine persulfide intermediate. The tract at residues 335–336 is interaction with tRNA; the sequence is RY.

It belongs to the MnmA/TRMU family.

It localises to the cytoplasm. It catalyses the reaction S-sulfanyl-L-cysteinyl-[protein] + uridine(34) in tRNA + AH2 + ATP = 2-thiouridine(34) in tRNA + L-cysteinyl-[protein] + A + AMP + diphosphate + H(+). In terms of biological role, catalyzes the 2-thiolation of uridine at the wobble position (U34) of tRNA, leading to the formation of s(2)U34. The sequence is that of tRNA-specific 2-thiouridylase MnmA from Marinomonas sp. (strain MWYL1).